The primary structure comprises 850 residues: Protein stoned-A (850 aa).

Positions 1 to 16 (MLKLPKGLKKKKKKSK) are enriched in basic residues. Disordered stretches follow at residues 1–95 (MLKL…AAGG) and 125–164 (KESFYQRLPSAAEKKKQKEEEAARLEAEQQEREKQRLGQI). The interval 26–290 (ELEQYKRDLK…QNLLLSESIE (265 aa)) is interaction with Syt. Residues 28–38 (EQYKRDLKAKQ) are compositionally biased toward basic and acidic residues. The segment covering 78 to 91 (ILNAQQQLSDQNQG) has biased composition (polar residues). Basic and acidic residues predominate over residues 136–164 (AEKKKQKEEEAARLEAEQQEREKQRLGQI). Residues 224–226 (DPF) carry the DPF 1 motif. Disordered stretches follow at residues 345 to 375 (EEEELEQKGRENQLLNPDLSEFDSLKDEEDD) and 412 to 498 (GSWA…PPFL). The segment covering 431-440 (PPPPVRPPTG) has biased composition (pro residues). Over residues 451-462 (SEDEEENPEDDP) the composition is skewed to acidic residues. 2 short sequence motifs (DPF) span residues 461-463 (DPF) and 535-537 (DPF). Disordered regions lie at residues 573 to 610 (HSLSDQDFDPRADQKEPAAPQVKLEQKETDFDTAQRKS), 634 to 673 (GNELGASKKPLTPYYAPSDNRLQEREREAEDVDPFDTSHV), 738 to 760 (RKKLTNSGGSGKSEEDIDPFDTS), and 800 to 825 (LGLGDKVLTPSTHSRPSLPAQDIDPF). 2 stretches are compositionally biased toward basic and acidic residues: residues 574–588 (SLSDQDFDPRADQKE) and 596–607 (LEQKETDFDTAQ). Short sequence motifs (DPF) lie at residues 666–668 (DPF), 755–757 (DPF), and 823–825 (DPF).

Interacts with the second C2 domain of Syt.

It is found in the cytoplasm. The protein resides in the synapse. The protein localises to the cytoplasmic vesicle. It localises to the secretory vesicle. Its subcellular location is the synaptic vesicle. Its function is as follows. Adapter protein involved in endocytic recycling of synaptic vesicles membranes. May act by mediating the retrieval of synaptotagmin protein Syt from the plasma membrane, thereby facilitating the internalization of multiple synaptic vesicles from the plasma membrane. The chain is Protein stoned-A (stnA) from Drosophila melanogaster (Fruit fly).